The primary structure comprises 69 residues: Sec-independent protein translocase protein TatA (69 aa).

A helical transmembrane segment spans residues Met-1–Gly-21.

It belongs to the TatA/E family. As to quaternary structure, forms a complex with TatC.

The protein localises to the cell inner membrane. Part of the twin-arginine translocation (Tat) system that transports large folded proteins containing a characteristic twin-arginine motif in their signal peptide across membranes. TatA could form the protein-conducting channel of the Tat system. The chain is Sec-independent protein translocase protein TatA from Pelodictyon phaeoclathratiforme (strain DSM 5477 / BU-1).